Reading from the N-terminus, the 435-residue chain is Polyadenylate-binding protein RBP47B (435 aa).

The segment covering 1-15 (MQTTNGSDSTLATSG) has biased composition (polar residues). Disordered regions lie at residues 1-41 (MQTT…QQWM) and 85-104 (YGSY…RGSG). Positions 29–41 (QWQQQQQQQQQWM) are enriched in low complexity. RRM domains are found at residues 108–188 (KTLW…WASF), 202–281 (LSVF…IATP), and 321–393 (ATIF…WGRS). The interval 392–412 (RSPNKQWRGDSGQQWNGGYSR) is disordered.

This sequence belongs to the polyadenylate-binding RBP47 family. In terms of assembly, interacts with the poly(A) tail of mRNA in nucleus. In terms of tissue distribution, expressed at low levels in leaves, stems, flowers, and seedlings.

Its subcellular location is the nucleus. It localises to the cytoplasmic granule. In terms of biological role, heterogeneous nuclear ribonucleoprotein (hnRNP)-protein binding the poly(A) tail of mRNA and probably involved in some steps of pre-mRNA maturation. This Arabidopsis thaliana (Mouse-ear cress) protein is Polyadenylate-binding protein RBP47B (RBP47B).